Consider the following 276-residue polypeptide: Putative aliphatic sulfonates transport permease protein SsuC (276 aa).

Helical transmembrane passes span Gly32 to Val52, Ala54 to Gly74, Ala87 to Phe107, Leu119 to Asp141, Ile146 to Val168, Ile199 to Leu219, and Val242 to Leu262. Residues Leu80–Val260 enclose the ABC transmembrane type-1 domain.

It belongs to the binding-protein-dependent transport system permease family. CysTW subfamily.

The protein localises to the cell membrane. In terms of biological role, part of a binding-protein-dependent transport system for aliphatic sulfonates. Probably responsible for the translocation of the substrate across the membrane. In Bacillus subtilis (strain 168), this protein is Putative aliphatic sulfonates transport permease protein SsuC (ssuC).